Here is a 246-residue protein sequence, read N- to C-terminus: MTFAATILTLYPEMFPGPLGVSLAGRALAEGKWSCDPVQIRDFATDRHRSVDDTPAGGGAGMVMRADVLARAVDHALETRPDSPLLAMTPRGAPLTQARVRQLAAGPGVTILCGRFEGIDERLFEARPIEPVSIGDYILSGGEMGALVLLDACIRLLPGVMGAPDSGDEESFESGLLEYPHYTRPAEWEGRTIPEVLRSGDHARIEAWRNAMAETDTRLRRPDLWERHEGARAQSPSGARRQKKER.

S-adenosyl-L-methionine contacts are provided by residues glycine 114 and 134-139 (IGDYIL). The segment covering 219–231 (LRRPDLWERHEGA) has biased composition (basic and acidic residues). The tract at residues 219–246 (LRRPDLWERHEGARAQSPSGARRQKKER) is disordered.

It belongs to the RNA methyltransferase TrmD family. Homodimer.

Its subcellular location is the cytoplasm. The catalysed reaction is guanosine(37) in tRNA + S-adenosyl-L-methionine = N(1)-methylguanosine(37) in tRNA + S-adenosyl-L-homocysteine + H(+). Functionally, specifically methylates guanosine-37 in various tRNAs. The chain is tRNA (guanine-N(1)-)-methyltransferase from Rhizorhabdus wittichii (strain DSM 6014 / CCUG 31198 / JCM 15750 / NBRC 105917 / EY 4224 / RW1) (Sphingomonas wittichii).